The primary structure comprises 822 residues: Glycerol-3-phosphate acyltransferase (822 aa).

The HXXXXD motif signature appears at 306–311 (CHRSHM). Residues 803 to 822 (ASSSAEMEAESQAVEETTQE) form a disordered region.

The protein belongs to the GPAT/DAPAT family.

The protein localises to the cell inner membrane. The enzyme catalyses sn-glycerol 3-phosphate + an acyl-CoA = a 1-acyl-sn-glycero-3-phosphate + CoA. The protein operates within phospholipid metabolism; CDP-diacylglycerol biosynthesis; CDP-diacylglycerol from sn-glycerol 3-phosphate: step 1/3. In Pectobacterium carotovorum subsp. carotovorum (strain PC1), this protein is Glycerol-3-phosphate acyltransferase.